The chain runs to 350 residues: MKLVDEAEILVTAGHGGNGCVGFRREKFIPLGGPDGGDGGSGGSVWIVADENVNTLVDFRHERTFKAQRGENGMGRQAYGKGGEDRIIVVPVGTVVINVQTDEVIGDLTRHGDRLLVAKGGKGGLGNMHFKSSVNRAPRQSTTGEEGEERLLKLELRLLADVGLLGFPNAGKSTLIRAVSSATPKVADYPFTTLYPNLGVVSVEAYRSFVIADVPGLIEGAADGAGLGTQFLRHLQRTRLLLHLVDMAPMDGGVDGVSPADQVRTLERELERHDPQLLKKPRWLVLNKADLMFEDEARAAAETIVAELGWTAPWYLVSALGRDGTFPIMKDVMAFFDRQREDELEARNAG.

An Obg domain is found at 1-159 (MKLVDEAEIL…RLLKLELRLL (159 aa)). A disordered region spans residues 127-146 (NMHFKSSVNRAPRQSTTGEE). Residues 130 to 143 (FKSSVNRAPRQSTT) show a composition bias toward polar residues. The 178-residue stretch at 160–337 (ADVGLLGFPN…IMKDVMAFFD (178 aa)) folds into the OBG-type G domain. Residues 166–173 (GFPNAGKS), 191–195 (FTTLY), 213–216 (DVPG), 287–290 (NKAD), and 318–320 (SAL) contribute to the GTP site. Mg(2+)-binding residues include S173 and T193.

Belongs to the TRAFAC class OBG-HflX-like GTPase superfamily. OBG GTPase family. As to quaternary structure, monomer. Mg(2+) is required as a cofactor.

The protein resides in the cytoplasm. An essential GTPase which binds GTP, GDP and possibly (p)ppGpp with moderate affinity, with high nucleotide exchange rates and a fairly low GTP hydrolysis rate. Plays a role in control of the cell cycle, stress response, ribosome biogenesis and in those bacteria that undergo differentiation, in morphogenesis control. The polypeptide is GTPase Obg (Xanthomonas oryzae pv. oryzae (strain MAFF 311018)).